The primary structure comprises 90 residues: Acylphosphatase (90 aa).

Positions 5–90 (SFVVHVWGQV…PPQKGGFHTN (86 aa)) constitute an Acylphosphatase-like domain. Catalysis depends on residues R20 and N38.

Belongs to the acylphosphatase family.

It catalyses the reaction an acyl phosphate + H2O = a carboxylate + phosphate + H(+). This is Acylphosphatase (acyP) from Aeromonas salmonicida (strain A449).